A 212-amino-acid chain; its full sequence is RNA chaperone ProQ (212 aa).

Positions 114–149 (RIAKAGKTSAPAANAKKPVKKPVARRPKAAPSAKPV) are disordered. The span at 118 to 129 (AGKTSAPAANAK) shows a compositional bias: low complexity. Over residues 130-141 (KPVKKPVARRPK) the composition is skewed to basic residues.

Belongs to the ProQ family.

It localises to the cytoplasm. Its function is as follows. RNA chaperone with significant RNA binding, RNA strand exchange and RNA duplexing activities. This Shewanella piezotolerans (strain WP3 / JCM 13877) protein is RNA chaperone ProQ.